Reading from the N-terminus, the 390-residue chain is Phosphoglycerate kinase (390 aa).

Substrate is bound by residues 19 to 21, Arg34, 57 to 60, Arg115, and Arg148; these read DYN and HLGR. ATP-binding positions include Lys198, Gly289, Glu320, and 347-350; that span reads GGDS.

Belongs to the phosphoglycerate kinase family. As to quaternary structure, monomer.

The protein resides in the cytoplasm. The catalysed reaction is (2R)-3-phosphoglycerate + ATP = (2R)-3-phospho-glyceroyl phosphate + ADP. The protein operates within carbohydrate degradation; glycolysis; pyruvate from D-glyceraldehyde 3-phosphate: step 2/5. The polypeptide is Phosphoglycerate kinase (Thermus thermophilus (strain ATCC BAA-163 / DSM 7039 / HB27)).